The following is a 352-amino-acid chain: UDP-3-O-acylglucosamine N-acyltransferase (352 aa).

Histidine 257 (proton acceptor) is an active-site residue.

Belongs to the transferase hexapeptide repeat family. LpxD subfamily. In terms of assembly, homotrimer.

The enzyme catalyses a UDP-3-O-[(3R)-3-hydroxyacyl]-alpha-D-glucosamine + a (3R)-hydroxyacyl-[ACP] = a UDP-2-N,3-O-bis[(3R)-3-hydroxyacyl]-alpha-D-glucosamine + holo-[ACP] + H(+). It functions in the pathway bacterial outer membrane biogenesis; LPS lipid A biosynthesis. In terms of biological role, catalyzes the N-acylation of UDP-3-O-acylglucosamine using 3-hydroxyacyl-ACP as the acyl donor. Is involved in the biosynthesis of lipid A, a phosphorylated glycolipid that anchors the lipopolysaccharide to the outer membrane of the cell. This Methylobacterium nodulans (strain LMG 21967 / CNCM I-2342 / ORS 2060) protein is UDP-3-O-acylglucosamine N-acyltransferase.